We begin with the raw amino-acid sequence, 268 residues long: Ribosomal RNA small subunit methyltransferase A (268 aa).

Residues Asn-23, Ile-25, Gly-50, Glu-72, Asp-97, and Asn-116 each contribute to the S-adenosyl-L-methionine site.

The protein belongs to the class I-like SAM-binding methyltransferase superfamily. rRNA adenine N(6)-methyltransferase family. RsmA subfamily.

It is found in the cytoplasm. It catalyses the reaction adenosine(1518)/adenosine(1519) in 16S rRNA + 4 S-adenosyl-L-methionine = N(6)-dimethyladenosine(1518)/N(6)-dimethyladenosine(1519) in 16S rRNA + 4 S-adenosyl-L-homocysteine + 4 H(+). Its function is as follows. Specifically dimethylates two adjacent adenosines (A1518 and A1519) in the loop of a conserved hairpin near the 3'-end of 16S rRNA in the 30S particle. May play a critical role in biogenesis of 30S subunits. In Rickettsia bellii (strain OSU 85-389), this protein is Ribosomal RNA small subunit methyltransferase A.